The following is a 1219-amino-acid chain: ATP-dependent helicase/nuclease subunit A (1219 aa).

Residues 12–477 enclose the UvrD-like helicase ATP-binding domain; the sequence is TRWTDNQWKS…IDLSQNFRSR (466 aa). Residue 33 to 40 participates in ATP binding; that stretch reads AAAGSGKT. The UvrD-like helicase C-terminal domain occupies 478–786; that stretch reads EEVLTTTNYL…RMMTIHSSKG (309 aa). The segment at 997 to 1016 is disordered; it reads PSKQSVSELKRQHETEQSDT. Basic and acidic residues predominate over residues 1004-1016; sequence ELKRQHETEQSDT.

The protein belongs to the helicase family. AddA subfamily. Heterodimer of AddA and AddB/RexB. The cofactor is Mg(2+).

It carries out the reaction Couples ATP hydrolysis with the unwinding of duplex DNA by translocating in the 3'-5' direction.. The enzyme catalyses ATP + H2O = ADP + phosphate + H(+). Functionally, the heterodimer acts as both an ATP-dependent DNA helicase and an ATP-dependent, dual-direction single-stranded exonuclease. Recognizes the chi site generating a DNA molecule suitable for the initiation of homologous recombination. The AddA nuclease domain is required for chi fragment generation; this subunit has the helicase and 3' -&gt; 5' nuclease activities. The chain is ATP-dependent helicase/nuclease subunit A from Staphylococcus saprophyticus subsp. saprophyticus (strain ATCC 15305 / DSM 20229 / NCIMB 8711 / NCTC 7292 / S-41).